The primary structure comprises 342 residues: MLKDQNLDIERKQDHIEINLTKNVESTLKSGFESIHFIHNALPEINYDSVNTTTTFLGKSLQAPILISSMTGGTTRARDINYRLAQVAQKAGIAMGLGSMRVLLTEPDTIKTFAVRHIAPDIPLLANIGAVQLNYGVTPKECQYLVDAIKADALILHLNVLQELTQPEGNRNWEKLLPKIREVVHYLSIPVIVKEVGYGLSKKVAESLIEAGVKVLDIAGSGGTSWSQVEAYRATNSLQNRIASSFINWGIPTLDSLKMVREVSKDIPIITSGGLKSGIDGAKAIRIGANIFGLAGQFLKAADTSESLLFEEIQLIIEQLKITMLCTGSRTLKDLAKAEIRL.

11–12 (RK) provides a ligand contact to substrate. Residues serine 68, 69–71 (SMT), serine 99, and asparagine 127 each bind FMN. 99-101 (SMR) contributes to the substrate binding site. Residue glutamine 162 participates in substrate binding. A Mg(2+)-binding site is contributed by glutamate 163. FMN-binding positions include lysine 194, threonine 224, 274-276 (GLK), and 295-296 (AG).

This sequence belongs to the IPP isomerase type 2 family. In terms of assembly, homooctamer. Dimer of tetramers. FMN is required as a cofactor. The cofactor is NADPH. It depends on Mg(2+) as a cofactor.

Its subcellular location is the cytoplasm. It catalyses the reaction isopentenyl diphosphate = dimethylallyl diphosphate. Its function is as follows. Involved in the biosynthesis of isoprenoids. Catalyzes the 1,3-allylic rearrangement of the homoallylic substrate isopentenyl (IPP) to its allylic isomer, dimethylallyl diphosphate (DMAPP). The chain is Isopentenyl-diphosphate delta-isomerase from Rickettsia peacockii (strain Rustic).